Here is a 239-residue protein sequence, read N- to C-terminus: MRYDKELTENEMIRQKILQQLLEWIECNLEHPISIEDIAQKSGYSRRNIQLLFRNFMHVPLGEYIRKRRLCRAAILVRLTAKSMLDIALSLHFDSQQSFSREFKKLFGCSPREYRHRDYWDLANIFPSFLIRQQQKTECRLINFPETPIFGNSFKYDIEVSNKSPDEEVKLRRHHLARCMKNFKTDIYFVSTFEPSTKSVDLLTVETFAGTVCEYADMPKEWTTTRGLYDPTHVIWTQA.

Residues 19–117 enclose the HTH araC/xylS-type domain; that stretch reads QQLLEWIECN…GCSPREYRHR (99 aa). DNA-binding regions (H-T-H motif) lie at residues 36-57 and 84-107; these read EDIA…RNFM and MLDI…KKLF.

This is Putative HTH-type transcriptional regulator YkgA (ykgA) from Escherichia coli (strain K12).